The chain runs to 198 residues: Peroxiredoxin-2 (198 aa).

The residue at position 2 (A2) is an N-acetylalanine. In terms of domain architecture, Thioredoxin spans 6-164 (ARIGKPAPDF…ALRLVQAFQY (159 aa)). The Cysteine sulfenic acid (-SOH) intermediate role is filled by C51. A Phosphoserine modification is found at S112. T182 is modified (phosphothreonine). Residue K196 is modified to N6-acetyllysine.

It belongs to the peroxiredoxin family. AhpC/Prx1 subfamily. As to quaternary structure, homodimer; disulfide-linked, upon oxidation. 5 homodimers assemble to form a ring-like decamer. Interacts with TIPIN. In terms of processing, the enzyme can be inactivated by further oxidation of the cysteine sulfenic acid (C(P)-SOH) to sulphinic acid (C(P)-SO2H) instead of its condensation to a disulfide bond. It can be reactivated by forming a transient disulfide bond with sulfiredoxin SRXN1, which reduces the cysteine sulfinic acid in an ATP- and Mg-dependent manner. Acetylation increases resistance to transition to high molecular-mass complexes. Deacetylated by HDAC6 which decreases reducing activity.

It is found in the cytoplasm. It catalyses the reaction a hydroperoxide + [thioredoxin]-dithiol = an alcohol + [thioredoxin]-disulfide + H2O. In terms of biological role, thiol-specific peroxidase that catalyzes the reduction of hydrogen peroxide and organic hydroperoxides to water and alcohols, respectively. Plays a role in cell protection against oxidative stress by detoxifying peroxides and as sensor of hydrogen peroxide-mediated signaling events. Might participate in the signaling cascades of growth factors and tumor necrosis factor-alpha by regulating the intracellular concentrations of H(2)O(2). The protein is Peroxiredoxin-2 (PRDX2) of Macaca fascicularis (Crab-eating macaque).